Consider the following 287-residue polypeptide: 5'-3' exonuclease (287 aa).

Residues 172–270 form the 5'-3' exonuclease domain; the sequence is IYPKEFIDLL…ITSEEITLKK (99 aa).

In terms of biological role, 5'-3' exonuclease acting preferentially on double-stranded DNA. The sequence is that of 5'-3' exonuclease (pol) from Buchnera aphidicola subsp. Schizaphis graminum (strain Sg).